We begin with the raw amino-acid sequence, 197 residues long: MSKRIRFDGAQAGWRATPRPGCTLDQRDWLTRGGSLTAHLARLGSVSVRVTREAVDCPWFDEPDALDSAPRAPMWVREVILSVDGTPYVAAHSIAPLAASKGGWQAMRRLRTRPLAELLYSDPQVERSALVSRRVIAGHPLYALASHALQGARAPHAFVARRSVFQRHGTPLMVTECMLPALWRHLDAHGDGPRGAA.

R77, L115, and E176 together coordinate substrate.

The protein belongs to the UbiC family.

It is found in the cytoplasm. It carries out the reaction chorismate = 4-hydroxybenzoate + pyruvate. It functions in the pathway cofactor biosynthesis; ubiquinone biosynthesis. Removes the pyruvyl group from chorismate, with concomitant aromatization of the ring, to provide 4-hydroxybenzoate (4HB) for the ubiquinone pathway. The sequence is that of Probable chorismate pyruvate-lyase from Burkholderia ambifaria (strain ATCC BAA-244 / DSM 16087 / CCUG 44356 / LMG 19182 / AMMD) (Burkholderia cepacia (strain AMMD)).